The following is a 307-amino-acid chain: Protease HtpX homolog (307 aa).

2 helical membrane-spanning segments follow: residues 10-30 and 40-60; these read VITI…AYGL and ISII…QWLV. Zn(2+) is bound at residue His144. Glu145 is an active-site residue. Residue His148 coordinates Zn(2+). 2 helical membrane passes run 156 to 176 and 187 to 207; these read LLLA…SMIF and FFLV…MILG. Glu213 serves as a coordination point for Zn(2+).

The protein belongs to the peptidase M48B family. Zn(2+) serves as cofactor.

The protein resides in the cell membrane. This is Protease HtpX homolog from Picrophilus torridus (strain ATCC 700027 / DSM 9790 / JCM 10055 / NBRC 100828 / KAW 2/3).